A 299-amino-acid polypeptide reads, in one-letter code: Large ribosomal subunit protein uL18 (299 aa).

The protein belongs to the universal ribosomal protein uL18 family. In terms of assembly, component of the large ribosomal subunit (LSU). Interacts with Fmr1 to form the RNA-induced silencing complex (RISC), a ribonucleoprotein (RNP) complex involved in translation regulation, other components of the complex are Rm62, RpL11, AGO2 and Dcr-1.

The protein resides in the cytoplasm. Its subcellular location is the nucleus. Its function is as follows. Component of the ribosome, a large ribonucleoprotein complex responsible for the synthesis of proteins in the cell. The small ribosomal subunit (SSU) binds messenger RNAs (mRNAs) and translates the encoded message by selecting cognate aminoacyl-transfer RNA (tRNA) molecules. The large subunit (LSU) contains the ribosomal catalytic site termed the peptidyl transferase center (PTC), which catalyzes the formation of peptide bonds, thereby polymerizing the amino acids delivered by tRNAs into a polypeptide chain. The nascent polypeptides leave the ribosome through a tunnel in the LSU and interact with protein factors that function in enzymatic processing, targeting, and the membrane insertion of nascent chains at the exit of the ribosomal tunnel. This Drosophila melanogaster (Fruit fly) protein is Large ribosomal subunit protein uL18 (RpL5).